Consider the following 426-residue polypeptide: Enolase (426 aa).

The interval 32 to 53 is disordered; sequence TGRAAVPSGASTGAYEAHEQRD. A (2R)-2-phosphoglycerate-binding site is contributed by Gln163. Catalysis depends on Glu205, which acts as the Proton donor. Asp242, Glu285, and Asp312 together coordinate Mg(2+). Lys337, Arg366, Ser367, and Lys388 together coordinate (2R)-2-phosphoglycerate. The active-site Proton acceptor is the Lys337.

Belongs to the enolase family. Mg(2+) serves as cofactor.

The protein resides in the cytoplasm. The protein localises to the secreted. Its subcellular location is the cell surface. It catalyses the reaction (2R)-2-phosphoglycerate = phosphoenolpyruvate + H2O. It functions in the pathway carbohydrate degradation; glycolysis; pyruvate from D-glyceraldehyde 3-phosphate: step 4/5. Catalyzes the reversible conversion of 2-phosphoglycerate (2-PG) into phosphoenolpyruvate (PEP). It is essential for the degradation of carbohydrates via glycolysis. This is Enolase from Hyphomonas neptunium (strain ATCC 15444).